The primary structure comprises 78 residues: Acyl carrier protein (78 aa).

A Carrier domain is found at 1-76 (MSLEERVKEI…DVINYLKEKV (76 aa)). S36 bears the O-(pantetheine 4'-phosphoryl)serine mark.

It belongs to the acyl carrier protein (ACP) family. In terms of processing, 4'-phosphopantetheine is transferred from CoA to a specific serine of apo-ACP by AcpS. This modification is essential for activity because fatty acids are bound in thioester linkage to the sulfhydryl of the prosthetic group.

It localises to the cytoplasm. The protein operates within lipid metabolism; fatty acid biosynthesis. Functionally, carrier of the growing fatty acid chain in fatty acid biosynthesis. In Aquifex aeolicus (strain VF5), this protein is Acyl carrier protein.